The chain runs to 426 residues: Serine hydroxymethyltransferase (426 aa).

Residues Leu113 and 117–119 contribute to the (6S)-5,6,7,8-tetrahydrofolate site; that span reads GHL. An N6-(pyridoxal phosphate)lysine modification is found at Lys222. 363–365 contacts (6S)-5,6,7,8-tetrahydrofolate; that stretch reads SAF.

Belongs to the SHMT family. Homodimer. Requires pyridoxal 5'-phosphate as cofactor.

It localises to the cytoplasm. It catalyses the reaction (6R)-5,10-methylene-5,6,7,8-tetrahydrofolate + glycine + H2O = (6S)-5,6,7,8-tetrahydrofolate + L-serine. It functions in the pathway one-carbon metabolism; tetrahydrofolate interconversion. It participates in amino-acid biosynthesis; glycine biosynthesis; glycine from L-serine: step 1/1. Its function is as follows. Catalyzes the reversible interconversion of serine and glycine with tetrahydrofolate (THF) serving as the one-carbon carrier. This reaction serves as the major source of one-carbon groups required for the biosynthesis of purines, thymidylate, methionine, and other important biomolecules. Also exhibits THF-independent aldolase activity toward beta-hydroxyamino acids, producing glycine and aldehydes, via a retro-aldol mechanism. The sequence is that of Serine hydroxymethyltransferase from Porphyromonas gingivalis (strain ATCC 33277 / DSM 20709 / CIP 103683 / JCM 12257 / NCTC 11834 / 2561).